A 334-amino-acid polypeptide reads, in one-letter code: tRNA uridine(34) hydroxylase (334 aa).

In terms of domain architecture, Rhodanese spans 123-217 (SDPDVILVDT…YLEEVKQEES (95 aa)). Catalysis depends on C177, which acts as the Cysteine persulfide intermediate.

This sequence belongs to the TrhO family.

The catalysed reaction is uridine(34) in tRNA + AH2 + O2 = 5-hydroxyuridine(34) in tRNA + A + H2O. In terms of biological role, catalyzes oxygen-dependent 5-hydroxyuridine (ho5U) modification at position 34 in tRNAs. The protein is tRNA uridine(34) hydroxylase of Shewanella putrefaciens (strain CN-32 / ATCC BAA-453).